A 249-amino-acid chain; its full sequence is Flavodoxin/ferredoxin--NADP reductase (249 aa).

The FAD-binding FR-type domain occupies 2-102; sequence NTWITAKIIK…KKSYGFFTLN (101 aa). Residues 51–54, tyrosine 67, 75–77, and threonine 117 contribute to the FAD site; these read RAYS and QLT. NADP(+)-binding positions include 144-145, 174-175, arginine 185, and 215-217; these read VR, SR, and NPD. 248–249 contributes to the FAD binding site; sequence YW.

This sequence belongs to the ferredoxin--NADP reductase type 1 family. It depends on FAD as a cofactor.

The protein resides in the cytoplasm. The enzyme catalyses 2 reduced [2Fe-2S]-[ferredoxin] + NADP(+) + H(+) = 2 oxidized [2Fe-2S]-[ferredoxin] + NADPH. It carries out the reaction reduced [flavodoxin] + NADP(+) = oxidized [flavodoxin] + NADPH + 2 H(+). In terms of biological role, transports electrons between flavodoxin or ferredoxin and NADPH. The chain is Flavodoxin/ferredoxin--NADP reductase (fpr) from Buchnera aphidicola subsp. Baizongia pistaciae (strain Bp).